The following is a 403-amino-acid chain: Acetate kinase (403 aa).

A Mg(2+)-binding site is contributed by Asn-7. ATP is bound at residue Lys-14. Position 97 (Arg-97) interacts with substrate. Asp-154 acts as the Proton donor/acceptor in catalysis. ATP contacts are provided by residues 213–217 (HLGNG), 287–289 (DMR), and 335–339 (GIGEN). Glu-388 is a binding site for Mg(2+).

It belongs to the acetokinase family. In terms of assembly, homodimer. It depends on Mg(2+) as a cofactor. Mn(2+) serves as cofactor.

The protein localises to the cytoplasm. It carries out the reaction acetate + ATP = acetyl phosphate + ADP. Its pathway is metabolic intermediate biosynthesis; acetyl-CoA biosynthesis; acetyl-CoA from acetate: step 1/2. Catalyzes the formation of acetyl phosphate from acetate and ATP. Can also catalyze the reverse reaction. This is Acetate kinase from Synechococcus sp. (strain JA-2-3B'a(2-13)) (Cyanobacteria bacterium Yellowstone B-Prime).